Reading from the N-terminus, the 360-residue chain is Protein phosphatase 1 regulatory subunit 7 (360 aa).

Residues 1–63 (MAAERGAGQQ…RGAEDPEEEH (63 aa)) form a disordered region. Ala-2 carries the post-translational modification N-acetylalanine. Ser-12, Ser-24, Ser-27, Ser-44, and Ser-47 each carry phosphoserine. Positions 17–34 (EVDRRVESEESGDEEGKK) are enriched in basic and acidic residues. 11 LRR repeats span residues 77–98 (DAED…EVLK), 99–120 (KVKS…DELQ), 121–142 (SLRE…EALT), 143–164 (ELEV…DKLT), 165–186 (QLKK…STLQ), 187–208 (QLQM…DTLT), 209–230 (NLES…DALS), 231–252 (NLTV…QNLV), 253–274 (NLRE…ENNN), 275–296 (KLTM…SHLT), and 297–318 (ELQE…DELK). Ser-322 is subject to Phosphoserine. One can recognise an LRRCT domain in the interval 331 to 360 (NPLQKDPQYRRKVMLALPSVRQIDATFVRF).

Belongs to the SDS22 family. Interacts with PPP1CA, PPP1CB and PPP1CC/PPP1G.

It localises to the nucleus. Functionally, regulatory subunit of protein phosphatase 1. This chain is Protein phosphatase 1 regulatory subunit 7 (Ppp1r7), found in Rattus norvegicus (Rat).